A 259-amino-acid polypeptide reads, in one-letter code: Eukaryotic translation initiation factor 3 subunit G-2 (259 aa).

Residues 179-257 enclose the RRM domain; the sequence is SAVRISNLSE…LILSVEWSKP (79 aa).

The protein belongs to the eIF-3 subunit G family. As to quaternary structure, component of the eukaryotic translation initiation factor 3 (eIF-3) complex. The eIF-3 complex interacts with pix.

Its subcellular location is the cytoplasm. RNA-binding component of the eukaryotic translation initiation factor 3 (eIF-3) complex, which is involved in protein synthesis of a specialized repertoire of mRNAs and, together with other initiation factors, stimulates binding of mRNA and methionyl-tRNAi to the 40S ribosome. The eIF-3 complex specifically targets and initiates translation of a subset of mRNAs involved in cell proliferation. This subunit can bind 18S rRNA. This is Eukaryotic translation initiation factor 3 subunit G-2 from Drosophila virilis (Fruit fly).